Reading from the N-terminus, the 431-residue chain is RbAp48-related WD40 repeat-containing protein prw1 (431 aa).

6 WD repeats span residues 127–159 (SHPESVCSAKLMPQDDSCVATVGNYHNDVLVFD), 182–213 (KHTQPCTSVCWNFLSKGTLVSGSQDATLSCWD), 232–263 (SHEKQVSDVRFHYKHQDLLASVSYDQYLHVHD), 279–310 (AHSGPIHSVAFNPHNDFILATCSTDKTIALWD), 323–354 (GHEDIVTKISFSPHEEPILASTSADRRTLVWD), and 380–411 (GHTSCTIDMDWCPNYNWTMATAAEDNILQIWT).

This sequence belongs to the WD repeat HIR1 family. Heterotetramer of alp13, clr6, prw1 and pst2.

Its subcellular location is the nucleus. Functionally, has a role in chromatin assembly and chromosome segregation. Involved in the deacetylation of histones. The sequence is that of RbAp48-related WD40 repeat-containing protein prw1 (prw1) from Schizosaccharomyces pombe (strain 972 / ATCC 24843) (Fission yeast).